We begin with the raw amino-acid sequence, 536 residues long: Signal peptide peptidase-like 5 (536 aa).

A signal peptide spans 1–29; that stretch reads MSLPPFTCRLLAAAAALYLIGLLCVGADT. The Lumenal portion of the chain corresponds to 30-186; it reads KDVTAPKIPG…VELLLYAPKS (157 aa). The 77-residue stretch at 94–170 folds into the PA domain; that stretch reads SNLTSKLSWS…TSSGDALKKS (77 aa). Asn95 and Asn151 each carry an N-linked (GlcNAc...) asparagine glycan. The chain crosses the membrane as a helical span at residues 187–207; that stretch reads PIVDYAVVFLWLMSVGTVFVA. The Cytoplasmic portion of the chain corresponds to 208 to 243; it reads SVWSHVTSPKKNDEQYDELSPKKSSNVDATKGGAEE. The interval 218 to 238 is disordered; it reads KNDEQYDELSPKKSSNVDATK. The helical transmembrane segment at 244-264 threads the bilayer; it reads ETLDISAMGAVIFVISASTFL. Over 265–273 the chain is Lumenal; sequence VLLFFFMSS. Residues 274 to 296 traverse the membrane as a helical segment; that stretch reads WFILILTIFFVIGGMQGMHNINV. Over 297–318 the chain is Cytoplasmic; it reads TLITRRCSKCGQKNLKLPLLGN. A helical transmembrane segment spans residues 319 to 339; it reads TSILSLVVLLFCFVVAILWFM. At 340-344 the chain is on the lumenal side; that stretch reads NRKTS. A helical membrane pass occupies residues 345–365; the sequence is HAWAGQDIFGICMMINVLQVA. Residues 366-374 are Cytoplasmic-facing; the sequence is RLPNIRVAT. Residues 375-395 form a helical membrane-spanning segment; that stretch reads ILLCCAFFYDIFWVFISPLIF. The active site involves Asp384. The Lumenal segment spans residues 396–428; it reads KQSVMIAVARGSKDTGESIPMLLRIPRLSDPWG. Residues 429–449 form a helical membrane-spanning segment; that stretch reads GYNMIGFGDILFPGLLICFIF. The active site involves Asp437. Topologically, residues 450–463 are cytoplasmic; it reads RFDKENNKGVSNGY. The helical transmembrane segment at 464–484 threads the bilayer; the sequence is FPWLMFGYGLGLFLTYLGLYV. The Lumenal portion of the chain corresponds to 485 to 489; that stretch reads MNGHG. Residues 490–510 form a helical membrane-spanning segment; that stretch reads QPALLYLVPCTLGITVILGLV. The PAL signature appears at 491–493; the sequence is PAL. The Cytoplasmic portion of the chain corresponds to 511 to 536; the sequence is RKELRDLWNYGTQQPSAADVNPSPEA.

This sequence belongs to the peptidase A22B family. In terms of processing, glycosylated.

It is found in the endosome membrane. Intramembrane-cleaving aspartic protease (I-CLiP) that cleaves type II membrane signal peptides in the hydrophobic plane of the membrane. This Arabidopsis thaliana (Mouse-ear cress) protein is Signal peptide peptidase-like 5 (SPPL5).